A 436-amino-acid chain; its full sequence is AMSH-like protease (436 aa).

Residue Met1 is modified to N-acetylmethionine. Residues Ser25 and Ser242 each carry the phosphoserine modification. The 129-residue stretch at 269 to 397 folds into the MPN domain; the sequence is VVLPEDLCHK…IFRLTNAGML (129 aa). The Zn(2+) site is built by His347, His349, Asp360, His362, Cys402, His408, and His410. The JAMM motif motif lies at 347–360; sequence HTHPTQTAFLSSVD.

The protein belongs to the peptidase M67C family. The cofactor is Zn(2+). Ubiquitously expressed.

With respect to regulation, inhibited by UbV(SP.1), an ubiquitin variant that also inhibits STAMBP. Zinc metalloprotease that specifically cleaves 'Lys-63'-linked polyubiquitin chains. Acts as a positive regulator of the TORC1 signaling pathway by mediating 'Lys-63'-linked deubiquitination of SESN2, thereby inhibiting SESN2-interaction with the GATOR2 complex. Does not cleave 'Lys-48'-linked polyubiquitin chains. This is AMSH-like protease from Homo sapiens (Human).